Consider the following 723-residue polypeptide: Fatty acid oxidation complex subunit alpha (723 aa).

The segment at 1-189 (MIYQAKTLQV…KVGLLDAIVD (189 aa)) is enoyl-CoA hydratase/isomerase. D296 serves as a coordination point for substrate. Residues 311-723 (SQDTQHAAVL…FYSAQQVSAL (413 aa)) are 3-hydroxyacyl-CoA dehydrogenase. NAD(+) is bound by residues M325, D344, 401-403 (VVE), K408, and S430. H451 acts as the For 3-hydroxyacyl-CoA dehydrogenase activity in catalysis. N454 contributes to the NAD(+) binding site. The substrate site is built by N501 and Y661.

It in the N-terminal section; belongs to the enoyl-CoA hydratase/isomerase family. The protein in the C-terminal section; belongs to the 3-hydroxyacyl-CoA dehydrogenase family. Heterotetramer of two alpha chains (FadB) and two beta chains (FadA).

The catalysed reaction is a (3S)-3-hydroxyacyl-CoA + NAD(+) = a 3-oxoacyl-CoA + NADH + H(+). It catalyses the reaction a (3S)-3-hydroxyacyl-CoA = a (2E)-enoyl-CoA + H2O. The enzyme catalyses a 4-saturated-(3S)-3-hydroxyacyl-CoA = a (3E)-enoyl-CoA + H2O. It carries out the reaction (3S)-3-hydroxybutanoyl-CoA = (3R)-3-hydroxybutanoyl-CoA. The catalysed reaction is a (3Z)-enoyl-CoA = a 4-saturated (2E)-enoyl-CoA. It catalyses the reaction a (3E)-enoyl-CoA = a 4-saturated (2E)-enoyl-CoA. Its pathway is lipid metabolism; fatty acid beta-oxidation. Its function is as follows. Involved in the aerobic and anaerobic degradation of long-chain fatty acids via beta-oxidation cycle. Catalyzes the formation of 3-oxoacyl-CoA from enoyl-CoA via L-3-hydroxyacyl-CoA. It can also use D-3-hydroxyacyl-CoA and cis-3-enoyl-CoA as substrate. This is Fatty acid oxidation complex subunit alpha from Vibrio cholerae serotype O1 (strain ATCC 39315 / El Tor Inaba N16961).